Reading from the N-terminus, the 870-residue chain is Probable coatomer subunit gamma (870 aa).

HEAT repeat units lie at residues 60–97, 99–133, 168–205, 278–315, 316–350, and 389–425; these read TEATEAFFGVTKLWQSKDVSLRRMVYLAVKELAEVSDD, IIVTSSLTKDMTGREDLYRAAAIRALCKITDTGML, EVVRRWANEVQEAVSSDNHMVQYHALALLYQIRANDRL, SEIQPAITALQMCCTSPKAAVRFAAVRTLNKVAMAHPN, AVMSCNVDLEKFITDPNRSIATLAITTLLKTGAES, and HTVMMPFLAKMLRSDGSYDYKKAIVETIIAIIEENPD.

It belongs to the COPG family. In terms of assembly, oligomeric complex that consists of at least the alpha, beta, beta', gamma, delta, epsilon and zeta subunits.

The protein resides in the cytoplasm. Its subcellular location is the golgi apparatus membrane. The protein localises to the cytoplasmic vesicle. It is found in the COPI-coated vesicle membrane. The coatomer is a cytosolic protein complex that binds to dilysine motifs and reversibly associates with Golgi non-clathrin-coated vesicles, which further mediate biosynthetic protein transport from the ER, via the Golgi up to the trans Golgi network. Coatomer complex is required for budding from Golgi membranes, and is essential for the retrograde Golgi-to-ER transport of dilysine-tagged proteins. This chain is Probable coatomer subunit gamma, found in Caenorhabditis elegans.